The sequence spans 596 residues: A-type ATP synthase subunit A (596 aa).

241 to 248 contacts ATP; that stretch reads GPFGSGKT.

This sequence belongs to the ATPase alpha/beta chains family. In terms of assembly, has multiple subunits with at least A(3), B(3), C, D, E, F, H, I and proteolipid K(x).

The protein localises to the cell membrane. It carries out the reaction ATP + H2O + 4 H(+)(in) = ADP + phosphate + 5 H(+)(out). Its function is as follows. Component of the A-type ATP synthase that produces ATP from ADP in the presence of a proton gradient across the membrane. The A chain is the catalytic subunit. This is A-type ATP synthase subunit A from Ignicoccus hospitalis (strain KIN4/I / DSM 18386 / JCM 14125).